Here is a 209-residue protein sequence, read N- to C-terminus: Abscisic acid receptor PYL3 (209 aa).

Residues 1–23 (MNLAPIHDPSSSSTTTTSSSTPY) form a disordered region. Low complexity predominate over residues 10 to 21 (SSSSTTTTSSST). The interval 43–205 (FPRSPNTCTS…NLQNLAVIST (163 aa)) is START-like. Residues Lys-79, 113 to 118 (ASTSVE), 140 to 146 (RLNNYRS), and Glu-170 contribute to the abscisate site. Residues 109 to 113 (SGLPA) carry the Gate loop motif. Positions 139-141 (HRL) match the Latch loop motif.

The protein belongs to the PYR/PYL/RCAR abscisic acid intracellular receptor family. As to quaternary structure, homodimer and monomer. Binds ABA on one subunit only. ABA-binding favors monomer and trans-homodimer intermediate, and increases PP2C inhibitor activity. Binds both (-)-ABA and (+)-ABA. Binds to CARs protein in an ABA-independent manner, both at the plasma membrane and in the nucleus. Interacts with HAB1, ABI1 and ABI2, and possibly with other PP2Cs.

It is found in the cytoplasm. Its subcellular location is the nucleus. The protein resides in the cell membrane. In terms of biological role, receptor for abscisic acid (ABA) required for ABA-mediated responses such as stomatal closure and germination inhibition. Inhibits the activity of group-A protein phosphatases type 2C (PP2Cs) when activated by ABA. Can be activated by both (-)-ABA and (+)-ABA. This chain is Abscisic acid receptor PYL3 (PYL3), found in Arabidopsis thaliana (Mouse-ear cress).